Consider the following 417-residue polypeptide: WAT1-related protein At3g02690, chloroplastic (417 aa).

A chloroplast-targeting transit peptide spans Met1–Arg68. The interval Val67–Val92 is disordered. Residues Arg68–Val89 are compositionally biased toward low complexity. Helical transmembrane passes span Phe122–Met142, Phe152–Tyr172, Ala183–Ala203, Leu213–Phe233, Ile237–Val257, Leu269–Val289, Ile301–Ile321, Val339–Tyr359, Leu369–Asn389, and Phe392–Phe412. EamA domains follow at residues Phe133–Leu255 and Ser283–Asn411.

The protein belongs to the drug/metabolite transporter (DMT) superfamily. Plant drug/metabolite exporter (P-DME) (TC 2.A.7.4) family.

It is found in the plastid. The protein resides in the chloroplast membrane. The chain is WAT1-related protein At3g02690, chloroplastic from Arabidopsis thaliana (Mouse-ear cress).